Here is a 1580-residue protein sequence, read N- to C-terminus: MEAQSHSSTTTEKKKVENSIVKCSTRTDVSEKAVASSTTSNEDESPGQTYHRERRNAITMQPQNVQGLSKVSEEPSTSSDERASLIKKEIHGSLPHVAEPSVPYRGTVFAMDPRNGYMEPHYHPPHLFPAFHPPVPIDARHHEGRYHYDPSPIPPLHMTSALSSSPTYPDLPFIRISPHRNPTAASESPFSPPHPYINPYMDYIRSLHSSPSLSMISATRGLSPTDAPHAGVSPAEYYHQMALLTGQRSPYADIIPSAATAGTGAIHMEYLHAMDSTRFSSPRLSARPSRKRTLSISPLSDHSFDLQTMIRTSPNSLVTILNNSRSSSSASGSYGHLSASAISPALSFTYSSAPVSLHMHQQILSRQQSLGSAFGHSPPLIHPAPTFPTQRPIPGIPTVLNPVQVSSGPSESSQNKPTSESAVSSTGDPMHNKRSKIKPDEDLPSPGARGQQEQPEGTTLVKEEGDKDESKQEPEVIYETNCHWEGCAREFDTQEQLVHHINNDHIHGEKKEFVCRWLDCSREQKPFKAQYMLVVHMRRHTGEKPHKCTFEGCTKAYSRLENLKTHLRSHTGEKPYVCEHEGCNKAFSNASDRAKHQNRTHSNEKPYVCKIPGCTKRYTDPSSLRKHVKTVHGPEAHVTKKQRGDIHPRPPPPRDSGSHSQSRSPGRPTQGALGEQQDLSNTTSKREECLQVKTVKAEKPMTSQPSPGGQSSCSSQQSPISNYSNSGLELPLTDGGSIGDLSAIDETPIMDSTISTATTALALQARRNPAGTKWMEHVKLERLKQVNGMFPRLNPILPPKAPAVSPLIGNGTQSNNTCSLGGPMTLLPGRSDLSGVDVTMLNMLNRRDSSASTISSAYLSSRRSSGISPCFSSRRSSEASQAEGRPQNVSVADSYDPISTDASRRSSEASQSDGLPSLLSLTPAQQYRLKAKYAAATGGPPPTPLPNMERMSLKTRLALLGDALEPGVALPPVHAPRRCSDGGAHGYGRRHLQPHDAPGHGVRRASDPVRTGSEGLALPRVPRFSSLSSCNPPAMATSAEKRSLVLQNYTRPEGGQSRNFHSSPCPPSITENVTLESLTMDADANLNDEDFLPDDVVQYLNSQNQAGYEQHFPSALPDDSKVPHGPGDFDAPGLPDSHAGQQFHALEQPCPEGSKTDLPIQWNEVSSGSADLSSSKLKCGPRPAVPQTRAFGFCNGMVVHPQNPLRSGPAGGYQTLGENSNPYGGPEHLMLHNSPGSGTSGNAFHEQPCKAPQYGNCLNRQPVAPGALDGACGAGIQASKLKSTPMQGSGGQLNFGLPVAPNESAGSMVNGMQNQDPVGQGYLAHQLLGDSMQHPGAGRPGQQMLGQISATSHINIYQGPESCLPGAHGMGSQPSSLAVVRGYQPCASFGGSRRQAMPRDSLALQSGQLSDTSQTCRVNGIKMEMKGQPHPLCSNLQNYSGQFYDQTVGFSQQDTKAGSFSISDASCLLQGTSAKNSELLSPGANQVTSTVDSLDSHDLEGVQIDFDAIIDDGDHSSLMSGALSPSIIQNLSHSSSRLTTPRASLPFPALSMSTTNMAIGDMSSLLTSLAEESKFLAVMQ.

M1 is modified (N-acetylmethionine). Composition is skewed to polar residues over residues 1-10 and 58-78; these read MEAQSHSSTT and ITMQPQNVQGLSKVSEEPSTS. Residues 1–79 form a disordered region; it reads MEAQSHSSTT…KVSEEPSTSS (79 aa). Position 175 is an omega-N-methylarginine (R175). Positions 368–475 are disordered; it reads QSLGSAFGHS…DKDESKQEPE (108 aa). Residues 401-427 are compositionally biased toward polar residues; sequence NPVQVSSGPSESSQNKPTSESAVSSTG. Residues K438 and K462 each participate in a glycyl lysine isopeptide (Lys-Gly) (interchain with G-Cter in SUMO2) cross-link. The segment covering 461-474 has biased composition (basic and acidic residues); it reads VKEEGDKDESKQEP. C2H2-type zinc fingers lie at residues 480 to 505, 513 to 540, 546 to 570, 576 to 601, and 607 to 632; these read TNCHWEGCAREFDTQEQLVHHINNDH, FVCRWLDCSREQKPFKAQYMLVVHMRRH, HKCTFEGCTKAYSRLENLKTHLRSH, YVCEHEGCNKAFSNASDRAKHQNRTH, and YVCKIPGCTKRYTDPSSLRKHVKTVH. The segment at 620–728 is disordered; sequence DPSSLRKHVK…PISNYSNSGL (109 aa). Positions 632-648 are enriched in basic and acidic residues; that stretch reads HGPEAHVTKKQRGDIHP. S664 carries the phosphoserine modification. Over residues 684–699 the composition is skewed to basic and acidic residues; sequence SKREECLQVKTVKAEK. A compositionally biased stretch (low complexity) spans 703–726; the sequence is SQPSPGGQSSCSSQQSPISNYSNS. Residues 745-845 form a mediates interaction with DZIP1 region; the sequence is DETPIMDSTI…VDVTMLNMLN (101 aa). Residue K773 forms a Glycyl lysine isopeptide (Lys-Gly) (interchain with G-Cter in ubiquitin) linkage. Residue K779 forms a Glycyl lysine isopeptide (Lys-Gly) (interchain with G-Cter in SUMO2); alternate linkage. Residue K779 forms a Glycyl lysine isopeptide (Lys-Gly) (interchain with G-Cter in ubiquitin); alternate linkage. Residues K784 and K800 each participate in a glycyl lysine isopeptide (Lys-Gly) (interchain with G-Cter in ubiquitin) cross-link. A phosphoserine; by PKA mark is found at S849, S865, S877, and S907. Over residues 863-882 the composition is skewed to low complexity; sequence RSSGISPCFSSRRSSEASQA. A disordered region spans residues 863 to 918; it reads RSSGISPCFSSRRSSEASQAEGRPQNVSVADSYDPISTDASRRSSEASQSDGLPSL. Positions 908–918 are enriched in polar residues; the sequence is EASQSDGLPSL. Phosphoserine; by PKA occurs at positions 980 and 1006. The disordered stretch occupies residues 981–1042; that stretch reads DGGAHGYGRR…PAMATSAEKR (62 aa).

The protein belongs to the GLI C2H2-type zinc-finger protein family. In terms of assembly, the full-length GLI3 form (GLI3FL) interacts with SUFU and this interaction regulates the formation of either repressor or activator forms of GLI3. Its association with SUFU is regulated by Hh signaling and dissociation of the SUFU-GLI3 interaction requires the presence of the ciliary motor KIF3A. Interacts with KIF7. The activator form of GLI3 (GLI3A) but not the repressor form (GLI3R) can interact with TRPS1. The phosphorylated form interacts with BTRC. Interacts with ZIC1. Interacts with ZIC3 (via C2H2-type domains 3, 4 and 5); the interaction enhances its transcriptional activity. Interacts with WRD11; the interaction associates EMX1 with GLI3. Interacts with DZIP1; retains GLI3 within the cytoplasm. Phosphorylated on multiple sites by protein kinase A (PKA) and phosphorylation by PKA primes further phosphorylation by CK1 and GSK3. Phosphorylated by DYRK2 (in vitro). Phosphorylation is essential for its proteolytic processing. Post-translationally, transcriptional repressor GLI3R, a C-terminally truncated form, is generated from the full-length GLI3 protein (GLI3FL/GLI3-190) through proteolytic processing. This process requires PKA-primed phosphorylation of GLI3, ubiquitination of GLI3 and the presence of BTRC. GLI3FL is complexed with SUFU in the cytoplasm and is maintained in a neutral state. Without the Hh signal, the SUFU-GLI3 complex is recruited to cilia, leading to the efficient processing of GLI3FL into GLI3R. GLI3R formation leads to its dissociation from SUFU, allowing it to translocate into the nucleus, and repress Hh target genes. When Hh signaling is initiated, SUFU dissociates from GLI3FL and this has two consequences. First, GLI3R production is halted. Second, free GLI3FL translocates to the nucleus, where it is phosphorylated, destabilized, and converted to a transcriptional activator (GLI3A). Phosphorylated in vitro by ULK3. In terms of tissue distribution, is expressed in a wide variety of normal adult tissues, including lung, colon, spleen, placenta, testis, and myometrium.

It localises to the nucleus. The protein localises to the cytoplasm. The protein resides in the cell projection. Its subcellular location is the cilium. Its function is as follows. Has a dual function as a transcriptional activator and a repressor of the sonic hedgehog (Shh) pathway, and plays a role in limb development. The full-length GLI3 form (GLI3FL) after phosphorylation and nuclear translocation, acts as an activator (GLI3A) while GLI3R, its C-terminally truncated form, acts as a repressor. A proper balance between the GLI3 activator and the repressor GLI3R, rather than the repressor gradient itself or the activator/repressor ratio gradient, specifies limb digit number and identity. In concert with TRPS1, plays a role in regulating the size of the zone of distal chondrocytes, in restricting the zone of PTHLH expression in distal cells and in activating chondrocyte proliferation. Binds to the minimal GLI-consensus sequence 5'-GGGTGGTC-3'. The protein is Transcriptional activator GLI3 (GLI3) of Homo sapiens (Human).